Here is a 1035-residue protein sequence, read N- to C-terminus: Probable LRR receptor-like serine/threonine-protein kinase At1g53440 (1035 aa).

Positions 1–26 are cleaved as a signal peptide; sequence MGFFFSTRKGLLLIIFICLDIFGSNA. At 27 to 607 the chain is on the extracellular side; sequence QLLPEDEVQT…VDTGKPLSNG (581 aa). Residues Asn46, Asn75, Asn83, and Asn110 are each glycosylated (N-linked (GlcNAc...) asparagine). LRR repeat units follow at residues 87–110, 111–135, 137–158, 160–182, 183–206, 208–232, and 234–254; these read VCRVTNIQLRGFNLRGIIPPEFGN, LTRLTEIDLVLNFLSGTIPTTLSQI, LEILAVTGNRLSGPFPPQLGQI, TLTDVIMESNLFTGQLPPNLGNL, RSLKRLLISSNNITGRIPESLSNL, NLTNFRIDGNSLSGKIPDFIGNWTR, and VRLDLQGTSMEGPIPASISNL. Asn194, Asn208, and Asn229 each carry an N-linked (GlcNAc...) asparagine glycan. 2 N-linked (GlcNAc...) asparagine glycosylation sites follow: Asn256 and Asn277. LRR repeat units follow at residues 278 to 302, 303 to 326, 328 to 349, and 350 to 372; these read MTNMERLVLRNCLIREPIPEYIGTS, MTMLKLLDLSSNMLNGTIPDTFRS, NAFNFMYLNNNSLTGPVPQFIL, and DSKQNIDLSYNNFTQPPTLSCNQ. Residues Asn317, Asn337, Asn361, Asn386, Asn469, and Asn559 are each glycosylated (N-linked (GlcNAc...) asparagine). Residues 608–628 form a helical membrane-spanning segment; it reads VVAGIVIAACVAFGLLVLVIL. The Cytoplasmic segment spans residues 629 to 1035; sequence RLTGYLGGKE…LDDLTDVEIE (407 aa). Thr656 carries the phosphothreonine modification. Residues 667–948 enclose the Protein kinase domain; it reads FDPENKIGEG…QGKIKVQPPL (282 aa). Residues 673 to 681 and Lys695 each bind ATP; that span reads IGEGGFGPV. A Phosphotyrosine modification is found at Tyr740. The active-site Proton acceptor is Asp793. Position 826 is a phosphoserine (Ser826). A phosphothreonine mark is found at Thr827 and Thr832. At Tyr840 the chain carries Phosphotyrosine. The tract at residues 969 to 1035 is disordered; it reads LSQDSESQVS…LDDLTDVEIE (67 aa). Over residues 972 to 981 the composition is skewed to polar residues; the sequence is DSESQVSTYT. Over residues 1009–1023 the composition is skewed to low complexity; that stretch reads SLLQQEEGNSSSSSR.

It belongs to the protein kinase superfamily. Ser/Thr protein kinase family.

The protein resides in the cell membrane. It carries out the reaction L-seryl-[protein] + ATP = O-phospho-L-seryl-[protein] + ADP + H(+). The catalysed reaction is L-threonyl-[protein] + ATP = O-phospho-L-threonyl-[protein] + ADP + H(+). The sequence is that of Probable LRR receptor-like serine/threonine-protein kinase At1g53440 from Arabidopsis thaliana (Mouse-ear cress).